The sequence spans 221 residues: Translation initiation factor 6 (221 aa).

This sequence belongs to the eIF-6 family.

In terms of biological role, binds to the 50S ribosomal subunit and prevents its association with the 30S ribosomal subunit to form the 70S initiation complex. The sequence is that of Translation initiation factor 6 from Methanosphaerula palustris (strain ATCC BAA-1556 / DSM 19958 / E1-9c).